A 455-amino-acid chain; its full sequence is MYKCALVLAAGQGKRIKSDLPKVLHKVCGKEMVNHVIDTIRKAGIQDANIIIGKGAELVKERTEEKKVTYSLQSEQLGTGHAVQCASEFLKGKKGTVAVFAGDTPLIKESTIKNLFNTHIEAKNAATILTAIVDDPTGYGRIIRSGNEVLKIVEHKDCNEEELKVNEMNSAIYCFDIKLLYESLSKLSNNNEQGEYYLTDVIEILKSAGHNIGAVVTDFEETIGVNSRAQLAQAEEILKDRINLKHMENGVTLIDPKTTYIGIDVEIGKDTIIYPNNIFEGNTIIGERCTIYQNSRIKDSIIKDEVDIQSSVILDSSIGNNTTVGPFAYIRPESKIGEKARIGDFVEIKKSIIGDGTKVSHLTYIGDAEVGKECNFGCGTVVVNYDGKKKYKTIIGNHSFIGCNTNLVSPVQVGDNTYIAAGSTITSEVQEGDLAVARAKQRNIKGWVDKKGLKK.

The pyrophosphorylase stretch occupies residues 1 to 228; the sequence is MYKCALVLAA…FEETIGVNSR (228 aa). Residues 8–11, K22, Q73, and 78–79 each bind UDP-N-acetyl-alpha-D-glucosamine; these read LAAG and GT. D103 lines the Mg(2+) pocket. Residues G140, E154, N169, and N226 each contribute to the UDP-N-acetyl-alpha-D-glucosamine site. Residue N226 coordinates Mg(2+). Positions 229-249 are linker; the sequence is AQLAQAEEILKDRINLKHMEN. The N-acetyltransferase stretch occupies residues 250–455; that stretch reads GVTLIDPKTT…GWVDKKGLKK (206 aa). UDP-N-acetyl-alpha-D-glucosamine-binding residues include R331 and K349. The active-site Proton acceptor is H361. UDP-N-acetyl-alpha-D-glucosamine contacts are provided by Y364 and N375. Acetyl-CoA is bound by residues 384-385, A421, and R438; that span reads NY.

It in the N-terminal section; belongs to the N-acetylglucosamine-1-phosphate uridyltransferase family. In the C-terminal section; belongs to the transferase hexapeptide repeat family. Homotrimer. Mg(2+) serves as cofactor.

Its subcellular location is the cytoplasm. It catalyses the reaction alpha-D-glucosamine 1-phosphate + acetyl-CoA = N-acetyl-alpha-D-glucosamine 1-phosphate + CoA + H(+). The catalysed reaction is N-acetyl-alpha-D-glucosamine 1-phosphate + UTP + H(+) = UDP-N-acetyl-alpha-D-glucosamine + diphosphate. It participates in nucleotide-sugar biosynthesis; UDP-N-acetyl-alpha-D-glucosamine biosynthesis; N-acetyl-alpha-D-glucosamine 1-phosphate from alpha-D-glucosamine 6-phosphate (route II): step 2/2. It functions in the pathway nucleotide-sugar biosynthesis; UDP-N-acetyl-alpha-D-glucosamine biosynthesis; UDP-N-acetyl-alpha-D-glucosamine from N-acetyl-alpha-D-glucosamine 1-phosphate: step 1/1. The protein operates within bacterial outer membrane biogenesis; LPS lipid A biosynthesis. In terms of biological role, catalyzes the last two sequential reactions in the de novo biosynthetic pathway for UDP-N-acetylglucosamine (UDP-GlcNAc). The C-terminal domain catalyzes the transfer of acetyl group from acetyl coenzyme A to glucosamine-1-phosphate (GlcN-1-P) to produce N-acetylglucosamine-1-phosphate (GlcNAc-1-P), which is converted into UDP-GlcNAc by the transfer of uridine 5-monophosphate (from uridine 5-triphosphate), a reaction catalyzed by the N-terminal domain. The polypeptide is Bifunctional protein GlmU (Clostridium botulinum (strain Eklund 17B / Type B)).